A 591-amino-acid chain; its full sequence is MKKISLPKIGIRPVIDGRRMGVRESLEEQTMNMAKATAVLITEKIRHACGAQVECVIADTCIAGMAESAACEEKFSSQNVGVTITVTPCWCYGSETIDMDPMRPKAIWGFNGTERPGAVYLAAALAAHSQKGIPAFSIYGHDVQDADDTSIPADVEEKLLRFARAGLAVASMKGKSYLSVGGVSMGIAGSIVDHNFFESWLGMKVQAVDMTELRRRIDQKIYDEAELEMALAWADKNFRYGEDQNASQYKRNEAQNRAVLKESLLMAMCIRDMMQGNKTLAGKGLVEESLGYNAIAAGFQGQRHWTDQYPNGDTAEALLNSSFDWNGVREPFVVATENDSLNGVAMLFGHQLTGTAQIFADVRTYWSPEAVERVTGQALSGLAEHGIIHLINSGSAALDGACKQRDSEGKPTMKPHWEISQQEADACLAATEWCPAIHEYFRGGGYSSRFLTEGGVPFTMTRVNIIKGLGPVLQIAEGWSVELPKAMHDQLDARTNSTWPTTWFAPRLTGKGPFTDVYSVMANWGANHGVLTIGHVGADFITLAAMLRIPVCMHNVEEAKIYRPSAWAAHGMDIEGQDYRACQNYGPLYKR.

Catalysis depends on proton acceptor residues Glu337 and Asp361. Residues Glu337, Asp361, and His528 each coordinate Mn(2+).

It belongs to the L-fucose isomerase family. As to quaternary structure, homohexamer. Mn(2+) is required as a cofactor.

The protein localises to the cytoplasm. It catalyses the reaction L-fucose = L-fuculose. It functions in the pathway carbohydrate degradation; L-fucose degradation; L-lactaldehyde and glycerone phosphate from L-fucose: step 1/3. In terms of biological role, converts the aldose L-fucose into the corresponding ketose L-fuculose. The sequence is that of L-fucose isomerase from Salmonella heidelberg (strain SL476).